We begin with the raw amino-acid sequence, 309 residues long: Palmitoyltransferase ZDHHC19 (309 aa).

Transmembrane regions (helical) follow at residues 29 to 49 (LFAA…FAFP) and 59 to 79 (WAFP…LVSL). Residues 112–162 (QWCPKCCFHRPPRTYHCPWCNICVEDFDHHCKWVNNCIGHRNFRFFMLLVL) enclose the DHHC domain. Cys142 functions as the S-palmitoyl cysteine intermediate in the catalytic mechanism. Transmembrane regions (helical) follow at residues 160 to 180 (LVLS…IFLV) and 193 to 213 (IAIV…LLLL). The span at 280–294 (LHPPMSPSALNPPAP) shows a compositional bias: pro residues. Residues 280–309 (LHPPMSPSALNPPAPTSGSLQSREGTPGAW) are disordered.

Belongs to the DHHC palmitoyltransferase family.

It localises to the golgi apparatus membrane. The protein resides in the cytoplasm. The protein localises to the perinuclear region. The catalysed reaction is L-cysteinyl-[protein] + hexadecanoyl-CoA = S-hexadecanoyl-L-cysteinyl-[protein] + CoA. Its function is as follows. Palmitoyltransferase that mediates palmitoylation oproteins, such as RRAS and SQSTM1. Catalyzes palmitoylation of RRAS, leading to increased cell viability. Acts as a positive regulator of autophagy by mediating palmitoylation of SQSTM1, promoting affinity between SQSTM1 and ATG8 proteins and recruitment of ubiquitinated cargo proteins to autophagosomes. In terms of biological role, (Microbial infection) Promotes Chikungunya virus (CHIKV) replication by mediating viral nsp1 palmitoylation. The chain is Palmitoyltransferase ZDHHC19 from Homo sapiens (Human).